The primary structure comprises 89 residues: Small ribosomal subunit protein uS14 (89 aa).

Belongs to the universal ribosomal protein uS14 family. As to quaternary structure, part of the 30S ribosomal subunit. Contacts proteins S3 and S10.

In terms of biological role, binds 16S rRNA, required for the assembly of 30S particles and may also be responsible for determining the conformation of the 16S rRNA at the A site. The protein is Small ribosomal subunit protein uS14 of Porphyromonas gingivalis (strain ATCC 33277 / DSM 20709 / CIP 103683 / JCM 12257 / NCTC 11834 / 2561).